Consider the following 155-residue polypeptide: Protein-export protein SecB (155 aa).

Belongs to the SecB family. As to quaternary structure, homotetramer, a dimer of dimers. One homotetramer interacts with 1 SecA dimer.

It localises to the cytoplasm. In terms of biological role, one of the proteins required for the normal export of preproteins out of the cell cytoplasm. It is a molecular chaperone that binds to a subset of precursor proteins, maintaining them in a translocation-competent state. It also specifically binds to its receptor SecA. In Shigella sonnei (strain Ss046), this protein is Protein-export protein SecB.